The chain runs to 279 residues: Putative methyltransferase Jann_4284 (279 aa).

The chain is Putative methyltransferase Jann_4284 from Jannaschia sp. (strain CCS1).